The following is an 874-amino-acid chain: Probable leucine--tRNA ligase, cytoplasmic (874 aa).

Residues 36–46 carry the 'HIGH' region motif; that stretch reads PYMNGRLHLGH. Residues 544–548 carry the 'KMSKS' region motif; it reads KMSKS. Lys-547 lines the ATP pocket.

It belongs to the class-I aminoacyl-tRNA synthetase family.

The protein resides in the cytoplasm. It catalyses the reaction tRNA(Leu) + L-leucine + ATP = L-leucyl-tRNA(Leu) + AMP + diphosphate. This chain is Probable leucine--tRNA ligase, cytoplasmic, found in Encephalitozoon cuniculi (strain GB-M1) (Microsporidian parasite).